Consider the following 335-residue polypeptide: MIVSILGAGAMGSALSVPLVDNGNEVRIWGTEFDTEILKSISAGREHPRLGVKLNGVEIFWPEQLEKCLENAEVVLLGVSTDGVLPVMSRILPYLKDQYIVLISKGLIDFDNSVLTVPEAVWRLKHDLRERTVAITGPAIAREVAKRMPTTVVFSSPSESSANKMKEIFETEYFGVEVTTDIIGTEITSALKNVYSIAIAWIRGYESRKNVEMSNAKGVIATRAINEMAELIEILGGDRETAFGLSGFGDLIATFRGGRNGMLGELLGKGLSIDEAMEELERRGVGVVEGYKTAEKAYRLSSKINADTKLLDSIYRVLYEGLKVEEVLFELATFK.

G137 lines the sn-glycerol 3-phosphate pocket. A141 contacts NADPH. K192, D250, R259, and N260 together coordinate sn-glycerol 3-phosphate. The active-site Proton acceptor is the K192. Position 259 (R259) interacts with NADPH. NADPH-binding residues include V287 and E289.

The protein belongs to the NAD-dependent glycerol-3-phosphate dehydrogenase family. In terms of assembly, homodimer.

The protein resides in the cytoplasm. The enzyme catalyses sn-glycerol 3-phosphate + NADP(+) = dihydroxyacetone phosphate + NADPH + H(+). Its function is as follows. Catalyzes the reduction of the glycolytic intermediate dihydroxyacetone phosphate (DHAP) to sn-glycerol 3-phosphate (G3P). Shows a 15-fold preference for NADPH over NADH in the reduction process. Can also catalyze the reverse reaction in vitro. Shows no activity with dihydroxyacetone, glycerol, glycerol-2-phosphate, D-glyceraldehyde-3-phosphate, DL-glyceraldehyde, D-erythrose-4-phosphate, D-fructose-6-phosphate, beta-D-glucose-6-phosphate, or alpha-D-galactose-1-phosphate. This is NADP(+)-dependent glycerol-3-phosphate dehydrogenase from Archaeoglobus fulgidus (strain ATCC 49558 / DSM 4304 / JCM 9628 / NBRC 100126 / VC-16).